The following is a 618-amino-acid chain: UvrABC system protein C (618 aa).

Residues Ser-19–Val-97 form the GIY-YIG domain. The 36-residue stretch at Gln-208–Ile-243 folds into the UVR domain.

The protein belongs to the UvrC family. As to quaternary structure, interacts with UvrB in an incision complex.

The protein localises to the cytoplasm. Its function is as follows. The UvrABC repair system catalyzes the recognition and processing of DNA lesions. UvrC both incises the 5' and 3' sides of the lesion. The N-terminal half is responsible for the 3' incision and the C-terminal half is responsible for the 5' incision. This chain is UvrABC system protein C, found in Legionella pneumophila (strain Lens).